The sequence spans 64 residues: Large ribosomal subunit protein bL33 (64 aa).

This sequence belongs to the bacterial ribosomal protein bL33 family.

In Synechococcus sp. (strain JA-2-3B'a(2-13)) (Cyanobacteria bacterium Yellowstone B-Prime), this protein is Large ribosomal subunit protein bL33.